A 29-amino-acid chain; its full sequence is Cytochrome b6-f complex subunit 8 (29 aa).

Residues 3-23 (IVSLAWAVLMVVFTFSLSLVV) form a helical membrane-spanning segment.

Belongs to the PetN family. As to quaternary structure, the 4 large subunits of the cytochrome b6-f complex are cytochrome b6, subunit IV (17 kDa polypeptide, PetD), cytochrome f and the Rieske protein, while the 4 small subunits are PetG, PetL, PetM and PetN. The complex functions as a dimer.

It is found in the plastid. The protein resides in the chloroplast thylakoid membrane. Functionally, component of the cytochrome b6-f complex, which mediates electron transfer between photosystem II (PSII) and photosystem I (PSI), cyclic electron flow around PSI, and state transitions. This is Cytochrome b6-f complex subunit 8 from Drimys granadensis.